A 94-amino-acid chain; its full sequence is Large ribosomal subunit protein bL25 (94 aa).

This sequence belongs to the bacterial ribosomal protein bL25 family. In terms of assembly, part of the 50S ribosomal subunit; part of the 5S rRNA/L5/L18/L25 subcomplex. Contacts the 5S rRNA. Binds to the 5S rRNA independently of L5 and L18.

This is one of the proteins that binds to the 5S RNA in the ribosome where it forms part of the central protuberance. This is Large ribosomal subunit protein bL25 from Serratia proteamaculans (strain 568).